The primary structure comprises 535 residues: Beta-amylase (535 aa).

The substrate site is built by D51, H91, and D99. The active-site Proton donor is E184. Substrate is bound by residues K293, H298, and T340. E378 functions as the Proton acceptor in the catalytic mechanism. Substrate contacts are provided by residues 379 to 380 (NA) and R418. A run of 3 repeats spans residues 489–499 (GPTGGMGGQAE), 500–510 (GPTCGMGGQVK), and 511–521 (GPTGGMGGQAE). The tract at residues 489 to 532 (GPTGGMGGQAEGPTCGMGGQVKGPTGGMGGQAEDPTSGIGGELP) is 4 X 11 AA tandem repeats. A disordered region spans residues 513–535 (TGGMGGQAEDPTSGIGGELPATM). One copy of the 4; approximate repeat lies at 522 to 532 (DPTSGIGGELP).

This sequence belongs to the glycosyl hydrolase 14 family. In terms of assembly, monomer.

The catalysed reaction is Hydrolysis of (1-&gt;4)-alpha-D-glucosidic linkages in polysaccharides so as to remove successive maltose units from the non-reducing ends of the chains.. This chain is Beta-amylase (BMY1), found in Hordeum vulgare (Barley).